The primary structure comprises 304 residues: Bifunctional protein FolD 3 (304 aa).

Residues 172–174, Ser-197, and Ile-238 contribute to the NADP(+) site; that span reads GRS.

It belongs to the tetrahydrofolate dehydrogenase/cyclohydrolase family. As to quaternary structure, homodimer.

The enzyme catalyses (6R)-5,10-methylene-5,6,7,8-tetrahydrofolate + NADP(+) = (6R)-5,10-methenyltetrahydrofolate + NADPH. It carries out the reaction (6R)-5,10-methenyltetrahydrofolate + H2O = (6R)-10-formyltetrahydrofolate + H(+). It participates in one-carbon metabolism; tetrahydrofolate interconversion. In terms of biological role, catalyzes the oxidation of 5,10-methylenetetrahydrofolate to 5,10-methenyltetrahydrofolate and then the hydrolysis of 5,10-methenyltetrahydrofolate to 10-formyltetrahydrofolate. This chain is Bifunctional protein FolD 3, found in Rhizorhabdus wittichii (strain DSM 6014 / CCUG 31198 / JCM 15750 / NBRC 105917 / EY 4224 / RW1) (Sphingomonas wittichii).